A 336-amino-acid chain; its full sequence is Dihydroorotate dehydrogenase (quinone) (336 aa).

Residues 62-66 (AGLDK) and T86 each bind FMN. Substrate is bound at residue K66. Position 111-115 (111-115 (NRMGF)) interacts with substrate. FMN is bound by residues N139 and N172. A substrate-binding site is contributed by N172. S175 acts as the Nucleophile in catalysis. N177 is a binding site for substrate. FMN is bound by residues K217 and T245. Substrate is bound at residue 246–247 (NT). Residues G268, G297, and 318–319 (YS) each bind FMN.

The protein belongs to the dihydroorotate dehydrogenase family. Type 2 subfamily. In terms of assembly, monomer. It depends on FMN as a cofactor.

Its subcellular location is the cell membrane. It catalyses the reaction (S)-dihydroorotate + a quinone = orotate + a quinol. Its pathway is pyrimidine metabolism; UMP biosynthesis via de novo pathway; orotate from (S)-dihydroorotate (quinone route): step 1/1. Its function is as follows. Catalyzes the conversion of dihydroorotate to orotate with quinone as electron acceptor. This is Dihydroorotate dehydrogenase (quinone) from Psychromonas ingrahamii (strain DSM 17664 / CCUG 51855 / 37).